A 370-amino-acid chain; its full sequence is Protein PELPK1 (370 aa).

A signal peptide spans Met-1–Ala-34. Tandem repeats lie at residues Pro-43–Lys-47, Pro-49–Lys-53, Phe-54–Lys-58, Pro-60–Lys-64, Pro-65–Lys-69, Pro-71–Lys-75, Pro-76–Lys-80, Pro-82–Lys-86, Pro-87–Lys-91, Pro-93–Lys-97, Pro-98–Lys-102, Pro-104–Lys-108, Leu-109–Lys-113, Pro-115–Lys-119, Pro-120–Lys-124, Pro-126–Lys-130, Pro-131–Lys-135, Pro-137–Lys-141, Pro-142–Lys-146, Pro-148–Lys-152, Pro-153–Lys-157, Pro-159–Lys-163, Pro-164–Lys-168, Pro-175–Lys-179, Pro-186–Lys-190, Pro-192–Lys-196, Pro-197–Lys-201, Pro-203–Lys-207, Pro-214–Lys-218, Pro-219–Lys-223, Pro-225–Lys-229, Pro-231–Lys-235, Pro-236–Lys-240, Pro-242–Lys-246, Leu-247–Lys-251, Pro-253–Lys-257, Pro-258–Lys-262, Pro-264–Lys-268, Pro-270–Lys-274, Pro-275–Lys-279, Pro-281–Lys-285, Pro-286–Lys-290, Pro-292–Lys-296, Pro-303–Lys-307, Pro-314–Lys-318, Pro-319–Lys-323, Pro-325–Lys-329, Pro-330–Lys-334, Pro-336–Lys-340, Pro-344–Lys-348, Pro-355–Lys-359, and Pro-361–Lys-365. The tract at residues Pro-43–Lys-365 is 52 X 5 AA tandem repeat of P-[DEGQ]-[AEFLIV]-[QPT]-K. Residues Pro-65–Lys-223 show a composition bias toward basic and acidic residues. Residues Pro-65–Pro-370 are disordered. The segment covering Glu-232–Lys-262 has biased composition (basic and acidic residues). Composition is skewed to basic and acidic residues over residues Glu-271 to Lys-296 and Pro-306 to Lys-334.

The protein resides in the secreted. It localises to the cell wall. Positive regulator of germination and plant growth. The polypeptide is Protein PELPK1 (Arabidopsis thaliana (Mouse-ear cress)).